The primary structure comprises 184 residues: Peptidyl-tRNA hydrolase (184 aa).

A tRNA-binding site is contributed by tyrosine 14. The Proton acceptor role is filled by histidine 19. TRNA contacts are provided by phenylalanine 60 and asparagine 62.

The protein belongs to the PTH family. Monomer.

The protein localises to the cytoplasm. The catalysed reaction is an N-acyl-L-alpha-aminoacyl-tRNA + H2O = an N-acyl-L-amino acid + a tRNA + H(+). Its function is as follows. Hydrolyzes ribosome-free peptidyl-tRNAs (with 1 or more amino acids incorporated), which drop off the ribosome during protein synthesis, or as a result of ribosome stalling. Catalyzes the release of premature peptidyl moieties from peptidyl-tRNA molecules trapped in stalled 50S ribosomal subunits, and thus maintains levels of free tRNAs and 50S ribosomes. The chain is Peptidyl-tRNA hydrolase from Mesomycoplasma hyopneumoniae (strain 232) (Mycoplasma hyopneumoniae).